The primary structure comprises 218 residues: Pyridoxine/pyridoxamine 5'-phosphate oxidase (218 aa).

Substrate contacts are provided by residues R14–Y17 and K72. FMN-binding positions include R67–K72, Y82–T83, R88, K89, and Q111. Residues Y129, R133, and S137 each coordinate substrate. Residues Q146–S147 and W191 contribute to the FMN site. Position 197-199 (R197–H199) interacts with substrate. Residue R201 participates in FMN binding.

The protein belongs to the pyridoxamine 5'-phosphate oxidase family. In terms of assembly, homodimer. FMN is required as a cofactor.

It carries out the reaction pyridoxamine 5'-phosphate + O2 + H2O = pyridoxal 5'-phosphate + H2O2 + NH4(+). The enzyme catalyses pyridoxine 5'-phosphate + O2 = pyridoxal 5'-phosphate + H2O2. Its pathway is cofactor metabolism; pyridoxal 5'-phosphate salvage; pyridoxal 5'-phosphate from pyridoxamine 5'-phosphate: step 1/1. It participates in cofactor metabolism; pyridoxal 5'-phosphate salvage; pyridoxal 5'-phosphate from pyridoxine 5'-phosphate: step 1/1. Functionally, catalyzes the oxidation of either pyridoxine 5'-phosphate (PNP) or pyridoxamine 5'-phosphate (PMP) into pyridoxal 5'-phosphate (PLP). This chain is Pyridoxine/pyridoxamine 5'-phosphate oxidase, found in Enterobacter sp. (strain 638).